The sequence spans 310 residues: Cytosolic Fe-S cluster assembly factor Nubp1 homolog (310 aa).

4 residues coordinate [4Fe-4S] cluster: Cys9, Cys23, Cys26, and Cys32. ATP is bound at residue 63-70; sequence GKGGVGKS. 2 residues coordinate [4Fe-4S] cluster: Cys240 and Cys243.

The protein belongs to the Mrp/NBP35 ATP-binding proteins family. NUBP1/NBP35 subfamily. Heterotetramer of 2 Nubp1 and 2 Nubp2 chains. [4Fe-4S] cluster is required as a cofactor.

The protein resides in the cytoplasm. In terms of biological role, component of the cytosolic iron-sulfur (Fe/S) protein assembly (CIA) machinery. Required for maturation of extramitochondrial Fe-S proteins. The Nubp1-Nubp2 heterotetramer forms a Fe-S scaffold complex, mediating the de novo assembly of an Fe-S cluster and its transfer to target apoproteins. The protein is Cytosolic Fe-S cluster assembly factor Nubp1 homolog of Drosophila virilis (Fruit fly).